The primary structure comprises 92 residues: Small ribosomal subunit protein uS19 (92 aa).

Belongs to the universal ribosomal protein uS19 family.

In terms of biological role, protein S19 forms a complex with S13 that binds strongly to the 16S ribosomal RNA. This is Small ribosomal subunit protein uS19 from Rhodopseudomonas palustris (strain BisA53).